The following is a 280-amino-acid chain: Nucleotide-binding protein Dgeo_0723 (280 aa).

Residue 8 to 15 (GLSGSGKS) participates in ATP binding. 57–60 (DART) serves as a coordination point for GTP.

It belongs to the RapZ-like family.

In terms of biological role, displays ATPase and GTPase activities. The chain is Nucleotide-binding protein Dgeo_0723 from Deinococcus geothermalis (strain DSM 11300 / CIP 105573 / AG-3a).